Here is a 233-residue protein sequence, read N- to C-terminus: Small ribosomal subunit protein uS3 (233 aa).

Residues 39–107 (VRKYLTKELE…PAQINIAEVR (69 aa)) enclose the KH type-2 domain. Residues 214–233 (VEQPEKPSAQPKKQQRKGRK) are disordered.

This sequence belongs to the universal ribosomal protein uS3 family. As to quaternary structure, part of the 30S ribosomal subunit. Forms a tight complex with proteins S10 and S14.

Functionally, binds the lower part of the 30S subunit head. Binds mRNA in the 70S ribosome, positioning it for translation. The polypeptide is Small ribosomal subunit protein uS3 (Pectobacterium atrosepticum (strain SCRI 1043 / ATCC BAA-672) (Erwinia carotovora subsp. atroseptica)).